Reading from the N-terminus, the 474-residue chain is Sugar transporter ERD6-like 17 (474 aa).

Helical transmembrane passes span 27–47 (ITAC…SFGV), 76–96 (FATL…MVIG), 106–126 (FLCI…LLNF), 129–149 (IISG…IAEI), 159–180 (TFSN…GNFI), 184–204 (TLAL…FFVP), 266–286 (TLVV…AAVI), 302–322 (IGTT…LILV), 329–349 (PLLM…GVAF), 363–383 (ILSF…LGGL), 403–423 (IVTL…NFLF), and 429–449 (GTFF…WLLV).

It belongs to the major facilitator superfamily. Sugar transporter (TC 2.A.1.1) family. In terms of tissue distribution, expressed in young seedlings.

The protein localises to the membrane. In terms of biological role, sugar transporter. This Arabidopsis thaliana (Mouse-ear cress) protein is Sugar transporter ERD6-like 17.